The following is a 351-amino-acid chain: ADP-glucose phosphorylase (351 aa).

Residues 1-63 (MTSPSHASDR…QNPNPKPSSC (63 aa)) are disordered. 41-44 (RAKR) lines the ADP-alpha-D-glucose pocket. Zn(2+)-binding residues include Cys63 and Cys66. Residues 72 to 74 (ECA) and Asn94 contribute to the ADP-alpha-D-glucose site. His133 contributes to the Zn(2+) binding site. ADP-alpha-D-glucose-binding positions include Asn173 and 179–182 (GASM). Zn(2+) is bound at residue His184. His186 (tele-AMP-histidine intermediate) is an active-site residue. Gln188 serves as a coordination point for ADP-alpha-D-glucose. 4 residues coordinate Zn(2+): Cys216, Cys219, His255, and His310. Residues Gly321 and 325-326 (FE) contribute to the ADP-alpha-D-glucose site.

The protein belongs to the galactose-1-phosphate uridylyltransferase type 1 family. As to quaternary structure, homodimer. Zn(2+) serves as cofactor.

It carries out the reaction alpha-D-glucose 1-phosphate + ADP + H(+) = ADP-alpha-D-glucose + phosphate. In terms of biological role, catalyzes the conversion of ADP-glucose and inorganic phosphate (Pi) into glucose-1-phosphate and ADP. Does not possess galactose-1-phosphate uridylyltransferase activity. The chain is ADP-glucose phosphorylase from Arabidopsis thaliana (Mouse-ear cress).